The chain runs to 609 residues: Beta-(1--&gt;2)glucan export ATP-binding/permease protein NdvA (609 aa).

The ABC transmembrane type-1 domain occupies 21–311 (GWILAGANLL…VVSFINSVFM (291 aa)). 6 helical membrane passes run 22–42 (WILA…PVLF), 68–88 (LLAV…TVAL), 146–166 (EHFA…YINW), 167–187 (RLAI…TLVV), 248–268 (WWAV…LAIF), and 285–305 (IVMF…VVSF). The region spanning 345–579 (VEFNDVSFSY…GGHFAQLAKA (235 aa)) is the ABC transporter domain. 378–385 (GPTGAGKS) contributes to the ATP binding site.

The protein belongs to the ABC transporter superfamily. Beta-(1--&gt;2)glucan exporter (TC 3.A.1.108.1) family. In terms of assembly, homodimer.

It is found in the cell inner membrane. It carries out the reaction [(1-&gt;2)-beta-D-glucosyl](n)(in) + ATP + H2O = [(1-&gt;2)-beta-D-glucosyl](n)(out) + ADP + phosphate + H(+). Functionally, involved in beta-(1--&gt;2)glucan export. Transmembrane domains (TMD) form a pore in the inner membrane and the ATP-binding domain (NBD) is responsible for energy generation. This chain is Beta-(1--&gt;2)glucan export ATP-binding/permease protein NdvA, found in Nitrobacter winogradskyi (strain ATCC 25391 / DSM 10237 / CIP 104748 / NCIMB 11846 / Nb-255).